A 402-amino-acid chain; its full sequence is Pyruvate synthase subunit PorA (402 aa).

In terms of assembly, heterotetramer of one alpha, one beta, one delta and one gamma chain.

It carries out the reaction 2 oxidized [2Fe-2S]-[ferredoxin] + pyruvate + CoA = 2 reduced [2Fe-2S]-[ferredoxin] + acetyl-CoA + CO2 + H(+). The protein is Pyruvate synthase subunit PorA (porA) of Methanosarcina barkeri (strain Fusaro / DSM 804).